The chain runs to 72 residues: MFMTSKKMAAAVLAITVAMSLSACSNWSKRDRNTAIGAGAGALGGAVLTDGSTLGTLGGAAVGGVIGHQVGK.

The signal sequence occupies residues 1–23 (MFMTSKKMAAAVLAITVAMSLSA). Cysteine 24 carries the N-palmitoyl cysteine lipid modification. Cysteine 24 carries the S-diacylglycerol cysteine lipid modification.

It is found in the cell membrane. Its function is as follows. Provides resistance to osmotic stress. May be important for stationary-phase survival. This is Osmotically-inducible lipoprotein B (osmB) from Salmonella typhimurium (strain LT2 / SGSC1412 / ATCC 700720).